We begin with the raw amino-acid sequence, 538 residues long: NAD(P)H-quinone oxidoreductase chain 4 1 (538 aa).

13 helical membrane-spanning segments follow: residues 7 to 27 (FPWLTAIIALPLVAALAIPII), 37 to 57 (WYGLGVAFADFALMIAAFWHY), 88 to 108 (LSMPLLLLTGLINTLAIFAAW), 116 to 136 (LFYGLMLVMYSAQLGVFVAQD), 137 to 157 (LLLFFLMWEIELVPVYLLISI), 170 to 190 (FILYTAAASIFILVAGFALAF), 210 to 230 (AIELLAYAGFLIAFGVKLPIF), 244 to 264 (SAPGSMILAGVLLKMGGYALI), 278 to 298 (FAPVLAILGVVNIVYGACCAF), 315 to 335 (MGFVLIGLASYTEIGVSGAVL), 336 to 356 (QMVSHGLVAASLFFLTGVTYE), 388 to 408 (LALPGMSGFVGELMVFIGIAT), and 418 to 438 (VVVVLLSAVGVILTPIYLLSM).

Belongs to the complex I subunit 4 family.

Its subcellular location is the cellular thylakoid membrane. The catalysed reaction is a plastoquinone + NADH + (n+1) H(+)(in) = a plastoquinol + NAD(+) + n H(+)(out). The enzyme catalyses a plastoquinone + NADPH + (n+1) H(+)(in) = a plastoquinol + NADP(+) + n H(+)(out). NDH-1 shuttles electrons from NAD(P)H, via FMN and iron-sulfur (Fe-S) centers, to quinones in the respiratory chain. The immediate electron acceptor for the enzyme in this species is believed to be plastoquinone. Couples the redox reaction to proton translocation (for every two electrons transferred, four hydrogen ions are translocated across the cytoplasmic membrane), and thus conserves the redox energy in a proton gradient. The chain is NAD(P)H-quinone oxidoreductase chain 4 1 from Nostoc sp. (strain PCC 7120 / SAG 25.82 / UTEX 2576).